The following is a 134-amino-acid chain: Small ribosomal subunit protein uS12 (134 aa).

The disordered stretch occupies residues 1–26; sequence MPTTQQLLRKGRTTLQKKSKVPALKG. Over residues 9 to 20 the composition is skewed to basic residues; sequence RKGRTTLQKKSK. 3-methylthioaspartic acid is present on D89. Residues 103-134 are disordered; the sequence is DTQGVKDRNKSRSKYGTKKPKAGAAAAGAKKK. Over residues 113 to 123 the composition is skewed to basic residues; the sequence is SRSKYGTKKPK. Over residues 124 to 134 the composition is skewed to low complexity; it reads AGAAAAGAKKK.

This sequence belongs to the universal ribosomal protein uS12 family. As to quaternary structure, part of the 30S ribosomal subunit. Contacts proteins S8 and S17. May interact with IF1 in the 30S initiation complex.

With S4 and S5 plays an important role in translational accuracy. Its function is as follows. Interacts with and stabilizes bases of the 16S rRNA that are involved in tRNA selection in the A site and with the mRNA backbone. Located at the interface of the 30S and 50S subunits, it traverses the body of the 30S subunit contacting proteins on the other side and probably holding the rRNA structure together. The combined cluster of proteins S8, S12 and S17 appears to hold together the shoulder and platform of the 30S subunit. This chain is Small ribosomal subunit protein uS12, found in Deinococcus geothermalis (strain DSM 11300 / CIP 105573 / AG-3a).